The following is a 66-amino-acid chain: Large ribosomal subunit protein uL29 (66 aa).

It belongs to the universal ribosomal protein uL29 family.

The chain is Large ribosomal subunit protein uL29 from Rhizobium johnstonii (strain DSM 114642 / LMG 32736 / 3841) (Rhizobium leguminosarum bv. viciae).